The following is a 337-amino-acid chain: Holliday junction branch migration complex subunit RuvB (337 aa).

Residues 4-184 (ADRLIAPAAI…FGIVQRLEFY (181 aa)) are large ATPase domain (RuvB-L). ATP contacts are provided by residues I23, R24, G65, K68, T69, T70, 131–133 (EDY), R174, Y184, and R221. T69 provides a ligand contact to Mg(2+). A small ATPAse domain (RuvB-S) region spans residues 185–255 (KVEDLAHIVG…IAAQALDMLD (71 aa)). The segment at 258–337 (NAGFDYMDRK…FGLTTPERQG (80 aa)) is head domain (RuvB-H). DNA contacts are provided by R313 and R318.

The protein belongs to the RuvB family. Homohexamer. Forms an RuvA(8)-RuvB(12)-Holliday junction (HJ) complex. HJ DNA is sandwiched between 2 RuvA tetramers; dsDNA enters through RuvA and exits via RuvB. An RuvB hexamer assembles on each DNA strand where it exits the tetramer. Each RuvB hexamer is contacted by two RuvA subunits (via domain III) on 2 adjacent RuvB subunits; this complex drives branch migration. In the full resolvosome a probable DNA-RuvA(4)-RuvB(12)-RuvC(2) complex forms which resolves the HJ.

Its subcellular location is the cytoplasm. The catalysed reaction is ATP + H2O = ADP + phosphate + H(+). The RuvA-RuvB-RuvC complex processes Holliday junction (HJ) DNA during genetic recombination and DNA repair, while the RuvA-RuvB complex plays an important role in the rescue of blocked DNA replication forks via replication fork reversal (RFR). RuvA specifically binds to HJ cruciform DNA, conferring on it an open structure. The RuvB hexamer acts as an ATP-dependent pump, pulling dsDNA into and through the RuvAB complex. RuvB forms 2 homohexamers on either side of HJ DNA bound by 1 or 2 RuvA tetramers; 4 subunits per hexamer contact DNA at a time. Coordinated motions by a converter formed by DNA-disengaged RuvB subunits stimulates ATP hydrolysis and nucleotide exchange. Immobilization of the converter enables RuvB to convert the ATP-contained energy into a lever motion, pulling 2 nucleotides of DNA out of the RuvA tetramer per ATP hydrolyzed, thus driving DNA branch migration. The RuvB motors rotate together with the DNA substrate, which together with the progressing nucleotide cycle form the mechanistic basis for DNA recombination by continuous HJ branch migration. Branch migration allows RuvC to scan DNA until it finds its consensus sequence, where it cleaves and resolves cruciform DNA. This is Holliday junction branch migration complex subunit RuvB from Tolumonas auensis (strain DSM 9187 / NBRC 110442 / TA 4).